Reading from the N-terminus, the 437-residue chain is Citrate synthase (437 aa).

Active-site residues include histidine 316 and aspartate 372.

The protein belongs to the citrate synthase family. Homohexamer.

It carries out the reaction oxaloacetate + acetyl-CoA + H2O = citrate + CoA + H(+). It functions in the pathway carbohydrate metabolism; tricarboxylic acid cycle; isocitrate from oxaloacetate: step 1/2. With respect to regulation, weakly inhibited by ATP (apparent Ki = 10 mm). This Corynebacterium glutamicum (strain ATCC 13032 / DSM 20300 / JCM 1318 / BCRC 11384 / CCUG 27702 / LMG 3730 / NBRC 12168 / NCIMB 10025 / NRRL B-2784 / 534) protein is Citrate synthase (gltA).